We begin with the raw amino-acid sequence, 185 residues long: Adenine phosphoribosyltransferase (185 aa).

This sequence belongs to the purine/pyrimidine phosphoribosyltransferase family. Homodimer.

Its subcellular location is the cytoplasm. It catalyses the reaction AMP + diphosphate = 5-phospho-alpha-D-ribose 1-diphosphate + adenine. The protein operates within purine metabolism; AMP biosynthesis via salvage pathway; AMP from adenine: step 1/1. Its function is as follows. Catalyzes a salvage reaction resulting in the formation of AMP, that is energically less costly than de novo synthesis. In Pectobacterium carotovorum subsp. carotovorum (strain PC1), this protein is Adenine phosphoribosyltransferase.